The following is a 248-amino-acid chain: MIIPAIDLINGQVVRLYQGDYDQKTEYSSSPQARFDEYVSQGAVQLHLVDLDGAKETQARQLPLLTQLLSATEAPVQVGGGVRTEQDVADLLAAGASRVVIGSTAVKSPDLVASWMEKYGPEQIVLALDVNIDAQGNRHIAVAGWQENSGVTIEALIERFLPAGLKHVLCTDISRDGTLSGTNVELYRDLCARYPSVGFQASGGIGGIADIEALKGTGVKGIILGRALLEGKFSVGDAIACWANGTQD.

D7 acts as the Proton acceptor in catalysis. D129 (proton donor) is an active-site residue.

Belongs to the HisA/HisF family.

The protein localises to the cytoplasm. The catalysed reaction is 1-(5-phospho-beta-D-ribosyl)-5-[(5-phospho-beta-D-ribosylamino)methylideneamino]imidazole-4-carboxamide = 5-[(5-phospho-1-deoxy-D-ribulos-1-ylimino)methylamino]-1-(5-phospho-beta-D-ribosyl)imidazole-4-carboxamide. It participates in amino-acid biosynthesis; L-histidine biosynthesis; L-histidine from 5-phospho-alpha-D-ribose 1-diphosphate: step 4/9. In Aeromonas salmonicida (strain A449), this protein is 1-(5-phosphoribosyl)-5-[(5-phosphoribosylamino)methylideneamino] imidazole-4-carboxamide isomerase.